We begin with the raw amino-acid sequence, 91 residues long: MAVKIRLKRMGAKKSPFYRIVVADSRSPRDGRFIEQVGHYNPVAKPEAEVRINEELALKWLADGAKPSDTVRNLFSKAGIMEKFHNAKNAK.

It belongs to the bacterial ribosomal protein bS16 family.

This chain is Small ribosomal subunit protein bS16, found in Exiguobacterium sp. (strain ATCC BAA-1283 / AT1b).